The primary structure comprises 232 residues: Ribonuclease 3 (232 aa).

In terms of domain architecture, RNase III spans Ile9–Asn131. Residue Glu44 participates in Mg(2+) binding. Residue Asp48 is part of the active site. The Mg(2+) site is built by Asp117 and Glu120. Residue Glu120 is part of the active site. Residues Asp158–Glu228 form the DRBM domain.

The protein belongs to the ribonuclease III family. In terms of assembly, homodimer. Mg(2+) is required as a cofactor.

The protein resides in the cytoplasm. The enzyme catalyses Endonucleolytic cleavage to 5'-phosphomonoester.. In terms of biological role, digests double-stranded RNA. Involved in the processing of primary rRNA transcript to yield the immediate precursors to the large and small rRNAs (23S and 16S). Processes some mRNAs, and tRNAs when they are encoded in the rRNA operon. Processes pre-crRNA and tracrRNA of type II CRISPR loci if present in the organism. This Blochmanniella floridana protein is Ribonuclease 3.